Consider the following 340-residue polypeptide: Guanine nucleotide-binding protein G(I)/G(S)/G(T) subunit beta-1 (340 aa).

WD repeat units follow at residues 53–83 (GHLA…IVWD), 95–125 (LRSS…SIYS), 141–170 (GHTG…ALWD), 182–212 (GHTG…KLWD), 224–254 (GHES…RLFD), 268–298 (NIIC…NVWD), and 310–340 (GHDN…KIWN).

It belongs to the WD repeat G protein beta family. As to quaternary structure, g proteins are composed of 3 units, alpha, beta and gamma.

In terms of biological role, guanine nucleotide-binding proteins (G proteins) are involved as a modulator or transducer in various transmembrane signaling systems. The beta and gamma chains are required for the GTPase activity, for replacement of GDP by GTP, and for G protein-effector interaction. The polypeptide is Guanine nucleotide-binding protein G(I)/G(S)/G(T) subunit beta-1 (GBETA1) (Homarus americanus (American lobster)).